The primary structure comprises 546 residues: Glucose-6-phosphate isomerase (546 aa).

Catalysis depends on Glu353, which acts as the Proton donor. Active-site residues include His384 and Lys512.

The protein belongs to the GPI family.

The protein localises to the cytoplasm. The catalysed reaction is alpha-D-glucose 6-phosphate = beta-D-fructose 6-phosphate. It participates in carbohydrate biosynthesis; gluconeogenesis. Its pathway is carbohydrate degradation; glycolysis; D-glyceraldehyde 3-phosphate and glycerone phosphate from D-glucose: step 2/4. In terms of biological role, catalyzes the reversible isomerization of glucose-6-phosphate to fructose-6-phosphate. This chain is Glucose-6-phosphate isomerase, found in Actinobacillus pleuropneumoniae serotype 3 (strain JL03).